The following is a 425-amino-acid chain: Dihydroorotase (425 aa).

Residues H56 and H58 each contribute to the Zn(2+) site. Substrate is bound by residues 58-60 (HYR) and N90. Residues D148, H175, and H228 each contribute to the Zn(2+) site. Residue N274 participates in substrate binding. D301 is a binding site for Zn(2+). Residue D301 is part of the active site. Residues H305 and 319–320 (FG) contribute to the substrate site.

It belongs to the metallo-dependent hydrolases superfamily. DHOase family. Class I DHOase subfamily. Zn(2+) serves as cofactor.

It catalyses the reaction (S)-dihydroorotate + H2O = N-carbamoyl-L-aspartate + H(+). It participates in pyrimidine metabolism; UMP biosynthesis via de novo pathway; (S)-dihydroorotate from bicarbonate: step 3/3. Its function is as follows. Catalyzes the reversible cyclization of carbamoyl aspartate to dihydroorotate. The polypeptide is Dihydroorotase (Lactobacillus helveticus (strain DPC 4571)).